Reading from the N-terminus, the 214-residue chain is MRIILLGAPGAGKGTQAQFIMEQYGIPQISTGDMLRAAVKAGTPLGLEAKKVMDAGQLVSDDLIIGLVKERIAQDDCAKGFLLDGFPRTIPQADAMAANGISIDHVIEIDVPDEEIVKRMSGRRVHPGSGRVYHVVFNPPKVEGKDDVTGEDLAIRPDDEEATVRKRLGIYHEQTKPLVEYYGKVAAAGNTQYHKFDGTQSVAAVSEQLASVLK.

10-15 (GAGKGT) serves as a coordination point for ATP. The segment at 30 to 59 (STGDMLRAAVKAGTPLGLEAKKVMDAGQLV) is NMP. AMP is bound by residues Thr31, Arg36, 57-59 (QLV), 85-88 (GFPR), and Gln92. The LID stretch occupies residues 122–159 (GRRVHPGSGRVYHVVFNPPKVEGKDDVTGEDLAIRPDD). Residues Arg123 and 132–133 (VY) each bind ATP. Arg156 and Arg167 together coordinate AMP. Gln200 contacts ATP.

Belongs to the adenylate kinase family. As to quaternary structure, monomer.

Its subcellular location is the cytoplasm. The enzyme catalyses AMP + ATP = 2 ADP. Its pathway is purine metabolism; AMP biosynthesis via salvage pathway; AMP from ADP: step 1/1. Catalyzes the reversible transfer of the terminal phosphate group between ATP and AMP. Plays an important role in cellular energy homeostasis and in adenine nucleotide metabolism. The sequence is that of Adenylate kinase from Shewanella oneidensis (strain ATCC 700550 / JCM 31522 / CIP 106686 / LMG 19005 / NCIMB 14063 / MR-1).